The chain runs to 355 residues: MNGTEGINFYVPLSNKTGLVRSPFEYPQYYLADPWKFKVLSFYMFFLIAAGMPLNGLTLFVTFQHKKLRQPLNYILVNLAAANLVTVCCGFTVTFYASWYAYFVFGPIGCAIEGFFATIGGQVALWSLVVLAIERYIVICKPMGNFRFSATHAIMGIAFTWFMALACAGPPLFGWSRFIPEGMQCSCGPDYYTLNPDFHNESYVIYMFIVHFTVPMVVIFFSYGRLVCKVREAAAQQQESATTQKAEKEVTRMVILMVLGFLLAWTPYAATAIWIFTNRGAAFSVTFMTIPAFFSKSSSIYNPIIYVLLNKQFRNCMVTTICCGKNPFGDEDVSSSVSQSKTEVSSVSSSQVAPA.

Residues 1–36 (MNGTEGINFYVPLSNKTGLVRSPFEYPQYYLADPWK) lie on the Extracellular side of the membrane. N-linked (GlcNAc...) asparagine glycans are attached at residues Asn2 and Asn15. A helical transmembrane segment spans residues 37–61 (FKVLSFYMFFLIAAGMPLNGLTLFV). Residues 62 to 73 (TFQHKKLRQPLN) lie on the Cytoplasmic side of the membrane. The chain crosses the membrane as a helical span at residues 74-98 (YILVNLAAANLVTVCCGFTVTFYAS). Residues 99 to 113 (WYAYFVFGPIGCAIE) are Extracellular-facing. The cysteines at positions 110 and 187 are disulfide-linked. The helical transmembrane segment at 114 to 133 (GFFATIGGQVALWSLVVLAI) threads the bilayer. Residues 134–152 (ERYIVICKPMGNFRFSATH) lie on the Cytoplasmic side of the membrane. Residues 153–176 (AIMGIAFTWFMALACAGPPLFGWS) traverse the membrane as a helical segment. Residues 177 to 202 (RFIPEGMQCSCGPDYYTLNPDFHNES) lie on the Extracellular side of the membrane. The N-linked (GlcNAc...) asparagine glycan is linked to Asn200. A helical transmembrane segment spans residues 203–230 (YVIYMFIVHFTVPMVVIFFSYGRLVCKV). The Cytoplasmic segment spans residues 231–252 (REAAAQQQESATTQKAEKEVTR). Residues 253 to 276 (MVILMVLGFLLAWTPYAATAIWIF) form a helical membrane-spanning segment. Residues 277–284 (TNRGAAFS) lie on the Extracellular side of the membrane. A helical membrane pass occupies residues 285 to 309 (VTFMTIPAFFSKSSSIYNPIIYVLL). Lys296 carries the post-translational modification N6-(retinylidene)lysine. Residues 310–355 (NKQFRNCMVTTICCGKNPFGDEDVSSSVSQSKTEVSSVSSSQVAPA) are Cytoplasmic-facing. Residues 333–355 (VSSSVSQSKTEVSSVSSSQVAPA) form a disordered region. Residues 334–355 (SSSVSQSKTEVSSVSSSQVAPA) are compositionally biased toward low complexity.

Belongs to the G-protein coupled receptor 1 family. Opsin subfamily. Post-translationally, phosphorylated on some or all of the serine and threonine residues present in the C-terminal region. In this lizard the color pigments are found in the rod-shaped photoreceptor cells which have been derived from ancestral cone-like photoreceptors.

The protein localises to the membrane. Its function is as follows. Visual pigments are the light-absorbing molecules that mediate vision. They consist of an apoprotein, opsin, covalently linked to cis-retinal. In Gekko gecko (Tokay gecko), this protein is Blue-sensitive opsin P467.